Consider the following 365-residue polypeptide: Cobalt-precorrin-5B C(1)-methyltransferase (365 aa).

It belongs to the CbiD family.

The enzyme catalyses Co-precorrin-5B + S-adenosyl-L-methionine = Co-precorrin-6A + S-adenosyl-L-homocysteine. It functions in the pathway cofactor biosynthesis; adenosylcobalamin biosynthesis; cob(II)yrinate a,c-diamide from sirohydrochlorin (anaerobic route): step 6/10. Functionally, catalyzes the methylation of C-1 in cobalt-precorrin-5B to form cobalt-precorrin-6A. This is Cobalt-precorrin-5B C(1)-methyltransferase from Geobacillus sp. (strain WCH70).